Here is a 216-residue protein sequence, read N- to C-terminus: Inactive ribonuclease-like protein 10 (216 aa).

The N-terminal stretch at 1-26 is a signal peptide; that stretch reads MKLNLVQIFFMLLMLLLGLGMGLGLG. Residues 43-65 form a disordered region; the sequence is EFWSSDSQDKAEATEEGDGTQTT.

The protein belongs to the pancreatic ribonuclease family. Post-translationally, the N-terminus is blocked. Glycosylated.

It is found in the secreted. Its function is as follows. Secreted proximal epididymal protein required for post-testicular sperm maturation and male fertility. May be involved in sperm adhesion to the egg zona pellucida. Does not have ribonuclease activity. The chain is Inactive ribonuclease-like protein 10 (RNASE10) from Homo sapiens (Human).